Here is a 366-residue protein sequence, read N- to C-terminus: Alanine racemase (366 aa).

Lys-40 (proton acceptor; specific for D-alanine) is an active-site residue. N6-(pyridoxal phosphate)lysine is present on Lys-40. Substrate is bound at residue Arg-136. Catalysis depends on Tyr-263, which acts as the Proton acceptor; specific for L-alanine. Met-310 is a substrate binding site.

Belongs to the alanine racemase family. It depends on pyridoxal 5'-phosphate as a cofactor.

It carries out the reaction L-alanine = D-alanine. The protein operates within amino-acid biosynthesis; D-alanine biosynthesis; D-alanine from L-alanine: step 1/1. Functionally, catalyzes the interconversion of L-alanine and D-alanine. May also act on other amino acids. The chain is Alanine racemase (alr) from Streptococcus equi subsp. zooepidemicus (strain H70).